Here is a 259-residue protein sequence, read N- to C-terminus: MQKPVPKKHLGQNFLKDRKIAEKIVENIDLKNKEIIEIGCGTGFLTNFLLEKAKFVTCYEIDRNLIPILEKKFKNKNLRIINEDFLLAELEFKEKKTIIANLPYYITSKILFKIFANFEKFDKIILMVQNEVADRIVAKPKTPTYSKLSLASQYIAHVKKLFVVGPDSFFPKPKINSAVVFFDLRTNLDAKKTEQFFWFTKKCFQFKRKTLYNNLIFFLNKQQIEKIYNFFQFAQNIRPQQLDLVTYIRLADFYFNNIF.

6 residues coordinate S-adenosyl-L-methionine: Asn-13, Leu-15, Gly-39, Glu-60, Asp-84, and Asn-101.

It belongs to the class I-like SAM-binding methyltransferase superfamily. rRNA adenine N(6)-methyltransferase family. RsmA subfamily.

The protein resides in the cytoplasm. It catalyses the reaction adenosine(1518)/adenosine(1519) in 16S rRNA + 4 S-adenosyl-L-methionine = N(6)-dimethyladenosine(1518)/N(6)-dimethyladenosine(1519) in 16S rRNA + 4 S-adenosyl-L-homocysteine + 4 H(+). Functionally, specifically dimethylates two adjacent adenosines (A1518 and A1519) in the loop of a conserved hairpin near the 3'-end of 16S rRNA in the 30S particle. May play a critical role in biogenesis of 30S subunits. The sequence is that of Ribosomal RNA small subunit methyltransferase A from Mesomycoplasma hyopneumoniae (strain J / ATCC 25934 / NCTC 10110) (Mycoplasma hyopneumoniae).